A 772-amino-acid chain; its full sequence is Mitochondrial intermediate peptidase (772 aa).

Residues 1 to 37 constitute a mitochondrion transit peptide; sequence MLRTIILKAGSNASIPSLSRQNKLLRFFATAGAVSRT. Histidine 558 serves as a coordination point for Zn(2+). Residue glutamate 559 is part of the active site. Zn(2+) contacts are provided by histidine 562 and histidine 565.

It belongs to the peptidase M3 family. Requires Zn(2+) as cofactor.

Its subcellular location is the mitochondrion matrix. The enzyme catalyses Release of an N-terminal octapeptide as second stage of processing of some proteins imported into the mitochondrion.. Its activity is regulated as follows. Stimulated by Fe(2+). Its function is as follows. Cleaves proteins, imported into the mitochondrion, to their mature size. While most mitochondrial precursor proteins are processed to the mature form in one step by mitochondrial processing peptidase (MPP), the sequential cleavage by MIP of an octapeptide after initial processing by MPP is a required step for a subgroup of nuclear-encoded precursor proteins destined for the matrix or the inner membrane. Cleaves precursor proteins of respiratory components, including subunits of the electron transport chain and tricarboxylic acid cycle enzymes, and components of the mitochondrial genetic machinery, including ribosomal proteins, translation factors, and proteins required for mitochondrial DNA metabolism. The chain is Mitochondrial intermediate peptidase (OCT1) from Saccharomyces cerevisiae (strain YJM789) (Baker's yeast).